The primary structure comprises 778 residues: Endonuclease MutS2 (778 aa).

Position 328 to 335 (328 to 335 (GPNTGGKT)) interacts with ATP. The Smr domain maps to 702 to 777 (LDLRGKRYEE…GSGATIVTFK (76 aa)).

This sequence belongs to the DNA mismatch repair MutS family. MutS2 subfamily. Homodimer. Binds to stalled ribosomes, contacting rRNA.

Endonuclease that is involved in the suppression of homologous recombination and thus may have a key role in the control of bacterial genetic diversity. Functionally, acts as a ribosome collision sensor, splitting the ribosome into its 2 subunits. Detects stalled/collided 70S ribosomes which it binds and splits by an ATP-hydrolysis driven conformational change. Acts upstream of the ribosome quality control system (RQC), a ribosome-associated complex that mediates the extraction of incompletely synthesized nascent chains from stalled ribosomes and their subsequent degradation. Probably generates substrates for RQC. The sequence is that of Endonuclease MutS2 from Streptococcus pneumoniae (strain CGSP14).